The following is a 207-amino-acid chain: Uracil phosphoribosyltransferase (207 aa).

Residues R77, R102, and 129–137 (DPMLATGVS) contribute to the 5-phospho-alpha-D-ribose 1-diphosphate site. Uracil is bound by residues I192 and 197–199 (GDA). D198 is a 5-phospho-alpha-D-ribose 1-diphosphate binding site.

It belongs to the UPRTase family. Requires Mg(2+) as cofactor.

The enzyme catalyses UMP + diphosphate = 5-phospho-alpha-D-ribose 1-diphosphate + uracil. It functions in the pathway pyrimidine metabolism; UMP biosynthesis via salvage pathway; UMP from uracil: step 1/1. With respect to regulation, allosterically activated by GTP. Functionally, catalyzes the conversion of uracil and 5-phospho-alpha-D-ribose 1-diphosphate (PRPP) to UMP and diphosphate. The chain is Uracil phosphoribosyltransferase from Fervidobacterium nodosum (strain ATCC 35602 / DSM 5306 / Rt17-B1).